Here is a 57-residue protein sequence, read N- to C-terminus: uncharacterized protein (57 aa).

The interval 31–57 is disordered; that stretch reads HHQTSSFNPMPSEVSLHTSHNFPHTTF. Residues 33-57 are compositionally biased toward polar residues; it reads QTSSFNPMPSEVSLHTSHNFPHTTF.

This is an uncharacterized protein from Invertebrate iridescent virus 6 (IIV-6).